The chain runs to 456 residues: Pantothenate kinase 2, mitochondrial (456 aa).

The disordered stretch occupies residues alanine 16–glycine 89. 2 stretches are compositionally biased toward low complexity: residues arginine 28–serine 39 and serine 55–alanine 65. A phosphoserine mark is found at serine 55, serine 56, and serine 75. A Nuclear export signal motif is present at residues leucine 154 to leucine 161. Residue glutamate 224 is the Proton acceptor of the active site. Serine 278, serine 281, and arginine 293 together coordinate acetyl-CoA.

This sequence belongs to the type II pantothenate kinase family. In terms of assembly, homodimer.

It localises to the cytoplasm. The protein resides in the cytosol. The catalysed reaction is (R)-pantothenate + ATP = (R)-4'-phosphopantothenate + ADP + H(+). It participates in cofactor biosynthesis; coenzyme A biosynthesis; CoA from (R)-pantothenate: step 1/5. Its activity is regulated as follows. Inhibited by acetyl-CoA. Inhibited by calcium hopantenate. Activated by palmitoylcarnitine. Functionally, catalyzes the phosphorylation of pantothenate to generate 4'-phosphopantothenate in the first and rate-determining step of coenzyme A (CoA) synthesis. The polypeptide is Pantothenate kinase 2, mitochondrial (Pank2) (Mus musculus (Mouse)).